A 359-amino-acid polypeptide reads, in one-letter code: 5-formaminoimidazole-4-carboxamide-1-(beta)-D-ribofuranosyl 5'-monophosphate synthetase (359 aa).

The 5-amino-1-(5-phospho-beta-D-ribosyl)imidazole-4-carboxamide site is built by histidine 27 and serine 94. Residues 116–340 (RRLLRWESER…FGEIVTMGRR (225 aa)) enclose the ATP-grasp domain. Residues 146 to 208 (PEDI…TNFC) and glutamate 230 each bind ATP. Position 258 (asparagine 258) interacts with 5-amino-1-(5-phospho-beta-D-ribosyl)imidazole-4-carboxamide. The Mg(2+) site is built by glutamine 297 and glutamate 310.

It belongs to the phosphohexose mutase family. It depends on Mg(2+) as a cofactor. Requires Mn(2+) as cofactor.

It catalyses the reaction 5-amino-1-(5-phospho-beta-D-ribosyl)imidazole-4-carboxamide + formate + ATP = 5-formamido-1-(5-phospho-D-ribosyl)imidazole-4-carboxamide + ADP + phosphate. The protein operates within purine metabolism; IMP biosynthesis via de novo pathway; 5-formamido-1-(5-phospho-D-ribosyl)imidazole-4-carboxamide from 5-amino-1-(5-phospho-D-ribosyl)imidazole-4-carboxamide (formate route): step 1/1. Its function is as follows. Catalyzes the ATP- and formate-dependent formylation of 5-aminoimidazole-4-carboxamide-1-beta-d-ribofuranosyl 5'-monophosphate (AICAR) to 5-formaminoimidazole-4-carboxamide-1-beta-d-ribofuranosyl 5'-monophosphate (FAICAR) in the absence of folates. The chain is 5-formaminoimidazole-4-carboxamide-1-(beta)-D-ribofuranosyl 5'-monophosphate synthetase from Methanopyrus kandleri (strain AV19 / DSM 6324 / JCM 9639 / NBRC 100938).